The primary structure comprises 77 residues: Large ribosomal subunit protein bL28 (77 aa).

The protein belongs to the bacterial ribosomal protein bL28 family.

The polypeptide is Large ribosomal subunit protein bL28 (Methylibium petroleiphilum (strain ATCC BAA-1232 / LMG 22953 / PM1)).